The following is a 955-amino-acid chain: Auxin response factor 11 (955 aa).

Positions 143 to 245 (FCKNLTASDT…QLLLGVRRAT (103 aa)) form a DNA-binding region, TF-B3. Residues 518–543 (ESKLNATSRDPRNTDSYTSRSTSEQN) are compositionally biased toward polar residues. Disordered stretches follow at residues 518 to 573 (ESKL…LSSA) and 609 to 646 (TQGN…KSVN). Residues 551 to 560 (KTRRSKKGLP) are compositionally biased toward basic residues. The PB1 domain maps to 852-936 (RTYTKVQKQG…RCIRILSPSE (85 aa)).

This sequence belongs to the ARF family. As to quaternary structure, homodimers and heterodimers.

It localises to the nucleus. Functionally, auxin response factors (ARFs) are transcriptional factors that bind specifically to the DNA sequence 5'-TGTCTC-3' found in the auxin-responsive promoter elements (AuxREs). This Oryza sativa subsp. indica (Rice) protein is Auxin response factor 11 (ARF11).